The primary structure comprises 750 residues: Photosystem I P700 chlorophyll a apoprotein A1 (750 aa).

The next 8 helical transmembrane spans lie at 70-93 (VFSAHFGQLAIIFVWLSGMYFHGA), 156-179 (LYCTAIGALIFATLMLFAGWFHYH), 195-219 (LNHHLAGLLGLGSLAWAGHQVHVSL), 291-309 (TVHHHLAIAVLFLVAGHMY), 346-369 (WHAQLALNLAMLGSLTIIVAHHMY), 385-411 (LSLFTHHMWIGGFLVVGAAAHAAIFMV), 433-455 (AIISHLNWVCIFLGFHSFGLYIH), and 531-549 (FLVHHIHAFTIHVTVLILL). 2 residues coordinate [4Fe-4S] cluster: Cys573 and Cys582. The next 2 membrane-spanning stretches (helical) occupy residues 589–610 (HVFLGLFWMYNSISIVIFHFSW) and 664–686 (LSAYGLLFLGAHFVWAFSLMFLF). His675 serves as a coordination point for chlorophyll a'. Chlorophyll a contacts are provided by Met683 and Tyr691. Position 692 (Trp692) interacts with phylloquinone. The chain crosses the membrane as a helical span at residues 724–744 (AVGVAHYLLGGIATTWAFFLA).

Belongs to the PsaA/PsaB family. In terms of assembly, the PsaA/B heterodimer binds the P700 chlorophyll special pair and subsequent electron acceptors. PSI consists of a core antenna complex that captures photons, and an electron transfer chain that converts photonic excitation into a charge separation. The eukaryotic PSI reaction center is composed of at least 11 subunits. P700 is a chlorophyll a/chlorophyll a' dimer, A0 is one or more chlorophyll a, A1 is one or both phylloquinones and FX is a shared 4Fe-4S iron-sulfur center. is required as a cofactor.

The protein localises to the plastid. Its subcellular location is the chloroplast thylakoid membrane. The catalysed reaction is reduced [plastocyanin] + hnu + oxidized [2Fe-2S]-[ferredoxin] = oxidized [plastocyanin] + reduced [2Fe-2S]-[ferredoxin]. Its function is as follows. PsaA and PsaB bind P700, the primary electron donor of photosystem I (PSI), as well as the electron acceptors A0, A1 and FX. PSI is a plastocyanin-ferredoxin oxidoreductase, converting photonic excitation into a charge separation, which transfers an electron from the donor P700 chlorophyll pair to the spectroscopically characterized acceptors A0, A1, FX, FA and FB in turn. Oxidized P700 is reduced on the lumenal side of the thylakoid membrane by plastocyanin. The chain is Photosystem I P700 chlorophyll a apoprotein A1 from Psilotum nudum (Whisk fern).